The sequence spans 1026 residues: Cadherin-like and PC-esterase domain-containing protein 1 (1026 aa).

Positions 1–34 (MVCRPVFPCRRRFCPRPFLVGLVVAICLFYQTLT) are cleaved as a signal peptide. Residues N251, N404, N413, N737, N791, and N985 are each glycosylated (N-linked (GlcNAc...) asparagine).

It belongs to the PC-esterase family.

This is Cadherin-like and PC-esterase domain-containing protein 1 (CPED1) from Homo sapiens (Human).